We begin with the raw amino-acid sequence, 968 residues long: RNA polymerase-associated protein RapA (968 aa).

The Helicase ATP-binding domain occupies 163–332 (EVGRRYAPRV…FARLRLLDPD (170 aa)). 176–183 (DEVGLGKT) lines the ATP pocket. The short motif at 278 to 281 (DEAH) is the DEAH box element. The Helicase C-terminal domain occupies 491 to 641 (RVDWLIAFLK…AFELTCPSGH (151 aa)).

This sequence belongs to the SNF2/RAD54 helicase family. RapA subfamily. As to quaternary structure, interacts with the RNAP. Has a higher affinity for the core RNAP than for the holoenzyme. Its ATPase activity is stimulated by binding to RNAP.

Its function is as follows. Transcription regulator that activates transcription by stimulating RNA polymerase (RNAP) recycling in case of stress conditions such as supercoiled DNA or high salt concentrations. Probably acts by releasing the RNAP, when it is trapped or immobilized on tightly supercoiled DNA. Does not activate transcription on linear DNA. Probably not involved in DNA repair. This chain is RNA polymerase-associated protein RapA, found in Shewanella denitrificans (strain OS217 / ATCC BAA-1090 / DSM 15013).